We begin with the raw amino-acid sequence, 472 residues long: WD repeat-containing protein 88 (472 aa).

The tract at residues Met1–Ser22 is disordered. WD repeat units follow at residues Gly100–Asp139, Arg143–Lys182, Arg184–Val224, His228–Thr267, Ala271–Cys310, Gly319–Ser358, and Gly361–Leu400. The disordered stretch occupies residues Leu447–Asp472. Residues Ser458–Asp472 show a composition bias toward basic and acidic residues.

The sequence is that of WD repeat-containing protein 88 (WDR88) from Homo sapiens (Human).